The primary structure comprises 353 residues: Phenol hydroxylase P5 protein (353 aa).

Positions 3-93 (YQVTIEPIGT…DMVIEADVDE (91 aa)) constitute a 2Fe-2S ferredoxin-type domain. The [2Fe-2S] cluster site is built by C37, C42, C45, and C77. The FAD-binding FR-type domain maps to 102–201 (VQDYQATVIE…SGPYGQFFVR (100 aa)).

The multicomponent enzyme phenol hydroxylase is formed by P0, P1, P2, P3, P4 and P5 polypeptides. FAD is required as a cofactor. The cofactor is [2Fe-2S] cluster.

It catalyses the reaction phenol + NADPH + O2 + H(+) = catechol + NADP(+) + H2O. Its pathway is aromatic compound metabolism; phenol degradation. Catabolizes phenol, and some of its methylated derivatives. P5 is required for growth on phenol, and for in vitro phenol hydroxylase activity. Its function is as follows. Probable electron transfer from NADPH, via FAD and the 2Fe-2S center, to the oxygenase activity site of the enzyme. The sequence is that of Phenol hydroxylase P5 protein (mphP) from Acinetobacter pittii (strain PHEA-2).